The chain runs to 142 residues: Large ribosomal subunit protein uL11 (142 aa).

Belongs to the universal ribosomal protein uL11 family. Part of the ribosomal stalk of the 50S ribosomal subunit. Interacts with L10 and the large rRNA to form the base of the stalk. L10 forms an elongated spine to which L12 dimers bind in a sequential fashion forming a multimeric L10(L12)X complex. One or more lysine residues are methylated.

Its function is as follows. Forms part of the ribosomal stalk which helps the ribosome interact with GTP-bound translation factors. The sequence is that of Large ribosomal subunit protein uL11 from Proteus mirabilis (strain HI4320).